The chain runs to 310 residues: N-acetyl-gamma-glutamyl-phosphate reductase (310 aa).

The active site involves cysteine 116.

This sequence belongs to the NAGSA dehydrogenase family. Type 2 subfamily.

It is found in the cytoplasm. The enzyme catalyses N-acetyl-L-glutamate 5-semialdehyde + phosphate + NADP(+) = N-acetyl-L-glutamyl 5-phosphate + NADPH + H(+). Its pathway is amino-acid biosynthesis; L-arginine biosynthesis; N(2)-acetyl-L-ornithine from L-glutamate: step 3/4. Functionally, catalyzes the NADPH-dependent reduction of N-acetyl-5-glutamyl phosphate to yield N-acetyl-L-glutamate 5-semialdehyde. The protein is N-acetyl-gamma-glutamyl-phosphate reductase of Chelativorans sp. (strain BNC1).